Reading from the N-terminus, the 518-residue chain is Allene oxide synthase, chloroplastic (518 aa).

Residues 1-33 (MASISTPFPISLHPKTVRSKPLKFRVLTRPIKA) constitute a chloroplast transit peptide. Heme b contacts are provided by lysine 133, histidine 164, and lysine 168. (13S)-hydroperoxy-(9Z,11E)-octadecadienoate-binding residues include asparagine 321 and threonine 389. Positions 321 and 389 each coordinate (13S)-hydroperoxy-(9Z,11E,15Z)-octadecatrienoate. Positions 469 and 471 each coordinate heme b.

The protein belongs to the cytochrome P450 family. It depends on heme b as a cofactor.

It is found in the plastid. Its subcellular location is the chloroplast. It localises to the plastoglobule. It catalyses the reaction (13S)-hydroperoxy-(9Z,11E,15Z)-octadecatrienoate = (9Z,13S,15Z)-12,13-epoxyoctadeca-9,11,15-trienoate + H2O. The catalysed reaction is (13S)-hydroperoxy-(9Z,11E)-octadecadienoate = (9Z,13S)-12,13-epoxyoctadeca-9,11-dienoate + H2O. Its pathway is lipid metabolism; oxylipin biosynthesis. Its function is as follows. Cytochrome P450 enzyme involved in the biosynthesis of oxylipin jasmonates, important phytohormones acting as growth regulators and signaling molecules for plant defense. Functions as an allene oxide synthase that converts hydroperoxy fatty acids to unstable allene epoxides. Catalyzes the dehydration of 13-HPOTE ((13S)-hydroperoxy-(9Z,11E,15Z)-octadecatrienoate), as well as 13-HPODE ((13S)-hydroperoxy-(9Z,11E)-octadecadienoate). The chain is Allene oxide synthase, chloroplastic (CYP74A) from Arabidopsis thaliana (Mouse-ear cress).